Consider the following 339-residue polypeptide: Ketol-acid reductoisomerase (NADP(+)) (339 aa).

Positions 1-182 (MRVYYDRDAD…GGGRAGIIET (182 aa)) constitute a KARI N-terminal Rossmann domain. NADP(+) is bound by residues 24 to 27 (YGSQ), Arg-48, Ser-51, and 83 to 86 (DEGQ). The active site involves His-108. Gly-134 contacts NADP(+). The KARI C-terminal knotted domain occupies 183-328 (TFKEEVETDL…EKLRAMMPWI (146 aa)). Residues Asp-191, Glu-195, Glu-227, and Glu-231 each coordinate Mg(2+). Substrate is bound at residue Ser-252.

This sequence belongs to the ketol-acid reductoisomerase family. Requires Mg(2+) as cofactor.

It catalyses the reaction (2R)-2,3-dihydroxy-3-methylbutanoate + NADP(+) = (2S)-2-acetolactate + NADPH + H(+). The catalysed reaction is (2R,3R)-2,3-dihydroxy-3-methylpentanoate + NADP(+) = (S)-2-ethyl-2-hydroxy-3-oxobutanoate + NADPH + H(+). It participates in amino-acid biosynthesis; L-isoleucine biosynthesis; L-isoleucine from 2-oxobutanoate: step 2/4. The protein operates within amino-acid biosynthesis; L-valine biosynthesis; L-valine from pyruvate: step 2/4. In terms of biological role, involved in the biosynthesis of branched-chain amino acids (BCAA). Catalyzes an alkyl-migration followed by a ketol-acid reduction of (S)-2-acetolactate (S2AL) to yield (R)-2,3-dihydroxy-isovalerate. In the isomerase reaction, S2AL is rearranged via a Mg-dependent methyl migration to produce 3-hydroxy-3-methyl-2-ketobutyrate (HMKB). In the reductase reaction, this 2-ketoacid undergoes a metal-dependent reduction by NADPH to yield (R)-2,3-dihydroxy-isovalerate. This is Ketol-acid reductoisomerase (NADP(+)) from Gluconobacter oxydans (strain 621H) (Gluconobacter suboxydans).